The sequence spans 365 residues: Tartrate dehydrogenase/decarboxylase (365 aa).

3 residues coordinate Mn(2+): Asp225, Asp250, and Asp254.

This sequence belongs to the isocitrate and isopropylmalate dehydrogenases family. As to quaternary structure, homodimer. Requires Mg(2+) as cofactor. It depends on Mn(2+) as a cofactor. K(+) serves as cofactor.

It localises to the cytoplasm. It catalyses the reaction tartrate + NAD(+) = 2-hydroxy-3-oxosuccinate + NADH + H(+). The catalysed reaction is (2R,3S)-tartrate + NAD(+) = 2-hydroxy-3-oxosuccinate + NADH + H(+). It carries out the reaction (2R,3R)-tartrate + NAD(+) = 2-hydroxy-3-oxosuccinate + NADH + H(+). The enzyme catalyses (2R,3R)-tartrate + H(+) = (R)-glycerate + CO2. It catalyses the reaction (R)-malate + NAD(+) = pyruvate + CO2 + NADH. The protein operates within carbohydrate acid metabolism; tartrate degradation; 2-hydroxy-3-oxosuccinate from L-tartrate: step 1/1. It functions in the pathway carbohydrate acid metabolism; tartrate degradation; 2-hydroxy-3-oxosuccinate from meso-tartrate: step 1/1. It participates in carbohydrate acid metabolism; tartrate degradation; D-glycerate from L-tartrate: step 1/1. Functionally, has multiple catalytic activities. Apart from catalyzing the oxidation of (+)-tartrate to oxaloglycolate, also converts meso-tartrate to D-glycerate and catalyzes the oxidative decarboxylation of D-malate to pyruvate. In Pseudomonas putida (Arthrobacter siderocapsulatus), this protein is Tartrate dehydrogenase/decarboxylase.